The following is a 79-amino-acid chain: MLEEALEHLVKGIVDNPDDVQVASRNLRRGRVLEVRVHPDDLGKVIGRNGRTARALRTVVGAIGGRGVRVDLVDVDHVR.

The KH domain maps to 30–79; that stretch reads GRVLEVRVHPDDLGKVIGRNGRTARALRTVVGAIGGRGVRVDLVDVDHVR.

Belongs to the KhpA RNA-binding protein family.

It localises to the cytoplasm. It is found in the nucleoid. A probable RNA-binding protein. This Streptomyces coelicolor (strain ATCC BAA-471 / A3(2) / M145) protein is RNA-binding protein KhpA.